The sequence spans 116 residues: Large ribosomal subunit protein uL18 (116 aa).

It belongs to the universal ribosomal protein uL18 family. In terms of assembly, part of the 50S ribosomal subunit; part of the 5S rRNA/L5/L18/L25 subcomplex. Contacts the 5S and 23S rRNAs.

Functionally, this is one of the proteins that bind and probably mediate the attachment of the 5S RNA into the large ribosomal subunit, where it forms part of the central protuberance. This chain is Large ribosomal subunit protein uL18, found in Shewanella halifaxensis (strain HAW-EB4).